The primary structure comprises 454 residues: Replicative DNA helicase DnaC (454 aa).

Residues 179–445 form the SF4 helicase domain; sequence RKGDITGIPT…NKFVNLERRF (267 aa). 210–217 provides a ligand contact to ATP; the sequence is ARPSVGKT.

Belongs to the helicase family. DnaB subfamily. The DNA replisome assembles sequentially on oriC in this order; DnaA, DnaD, DnaB, DnaI-DnaC helicase. Monomer in the absence of ATP, in its presence forms a probable homohexamer which is not active as a helicase in vitro. Interacts separately and simultaneously with helicase loaders DnaB and DnaI. Interaction with DnaB does not require ATP. Interaction with DnaI requires ATP, probably forms a DnaC(6):DnaI(6) complex, which is not active as a helicase.

It is found in the cytoplasm. It localises to the nucleoid. The enzyme catalyses Couples ATP hydrolysis with the unwinding of duplex DNA at the replication fork by translocating in the 5'-3' direction. This creates two antiparallel DNA single strands (ssDNA). The leading ssDNA polymer is the template for DNA polymerase III holoenzyme which synthesizes a continuous strand.. It catalyses the reaction ATP + H2O = ADP + phosphate + H(+). In terms of biological role, the main replicative DNA helicase, it participates in initiation and elongation during chromosome replication. Travels ahead of the DNA replisome, separating dsDNA into templates for DNA synthesis. The monomer has helicase activity in the presence of DnaI which is further increased by DnaB; the purified oligomeric form (probably a DnaC hexamer) does not have helicase activity in vitro, nor does the DnaC(6):DnaI(6) complex. The direction was not determined but is probably 5'-3'. Helicase activity requires an rNTP and is inactive with dNTPs. Has weak ATPase activity as a monomer, as an oligomer has ATPase activity which is stimulated by single-stranded (ss)DNA and further stimulated by DnaI and more by DnaB. Deletion of a single T residue in the promoter region (a run of 8 Ts becomes 7 Ts) decreases the helicase levels by 50%, decreasing DNA replication inititation during fast growth in rich medium. Suppresses the synthetic lethality of a dnaA1-yabA deletion for growth on rich medium. In Bacillus subtilis (strain 168), this protein is Replicative DNA helicase DnaC.